A 248-amino-acid polypeptide reads, in one-letter code: MIIPAIDLINGQVVRLYQGDYDQKTEYSSSPQARFDEYVSQGAVQLHLVDLDGAKETQARQLPLLTQLLSATEAPVQVGGGVRTEQDVADLLAAGASRVVIGSTAVKSPDLVASWMEKYGPEQIVLALDVNIDAQGNRHIAVAGWQENSGVTIEALIERFLPAGLKHVLCTDISRDGTLSGTNVELYRDLCARYPSVGFQASGGIGGIADIEALKGTGVKGIILGRALLEGKFSVGDAIACWANGTQD.

The active-site Proton acceptor is the aspartate 7. Aspartate 129 functions as the Proton donor in the catalytic mechanism.

This sequence belongs to the HisA/HisF family.

The protein resides in the cytoplasm. The enzyme catalyses 1-(5-phospho-beta-D-ribosyl)-5-[(5-phospho-beta-D-ribosylamino)methylideneamino]imidazole-4-carboxamide = 5-[(5-phospho-1-deoxy-D-ribulos-1-ylimino)methylamino]-1-(5-phospho-beta-D-ribosyl)imidazole-4-carboxamide. Its pathway is amino-acid biosynthesis; L-histidine biosynthesis; L-histidine from 5-phospho-alpha-D-ribose 1-diphosphate: step 4/9. This Aeromonas salmonicida (strain A449) protein is 1-(5-phosphoribosyl)-5-[(5-phosphoribosylamino)methylideneamino] imidazole-4-carboxamide isomerase.